Here is a 71-residue protein sequence, read N- to C-terminus: ATP synthase subunit c (71 aa).

The next 2 membrane-spanning stretches (helical) occupy residues 4-24 and 47-67; these read IAAA…NGQV and FIGV…ALIL.

Belongs to the ATPase C chain family. As to quaternary structure, F-type ATPases have 2 components, F(1) - the catalytic core - and F(0) - the membrane proton channel. F(1) has five subunits: alpha(3), beta(3), gamma(1), delta(1), epsilon(1). F(0) has three main subunits: a(1), b(2) and c(10-14). The alpha and beta chains form an alternating ring which encloses part of the gamma chain. F(1) is attached to F(0) by a central stalk formed by the gamma and epsilon chains, while a peripheral stalk is formed by the delta and b chains.

It is found in the cell membrane. Its function is as follows. F(1)F(0) ATP synthase produces ATP from ADP in the presence of a proton or sodium gradient. F-type ATPases consist of two structural domains, F(1) containing the extramembraneous catalytic core and F(0) containing the membrane proton channel, linked together by a central stalk and a peripheral stalk. During catalysis, ATP synthesis in the catalytic domain of F(1) is coupled via a rotary mechanism of the central stalk subunits to proton translocation. In terms of biological role, key component of the F(0) channel; it plays a direct role in translocation across the membrane. A homomeric c-ring of between 10-14 subunits forms the central stalk rotor element with the F(1) delta and epsilon subunits. The polypeptide is ATP synthase subunit c (Enterococcus hirae (strain ATCC 9790 / DSM 20160 / JCM 8729 / LMG 6399 / NBRC 3181 / NCIMB 6459 / NCDO 1258 / NCTC 12367 / WDCM 00089 / R)).